A 287-amino-acid chain; its full sequence is MLRVAVPNKGALSEPATEILAEAGYRRRTDPKDLTVVDPVNRVEFFFLRPKDIAIYVGSGDLDFGITGRDLVHDSDASVCERLALGFGSSSFRYAGPAGRDWTTSDLAGKRIATAYSNLVRKDLVAKGIEATVIRLDGAVEISVQLGVADVIADVVGSGRTLSLHDLVAFGEPLCDSEAVLIERGDRGSLDHHETVAARDQLVARVQGVVFGQQYLMLDYDCPRSVLDKATLITSGLESPTIAPLAEPGWVAIRALVPRRDINGIMDELAAIGAKAILASDIRFCRF.

The protein belongs to the ATP phosphoribosyltransferase family. Long subfamily. In terms of assembly, equilibrium between an active dimeric form, an inactive hexameric form and higher aggregates. Interconversion between the various forms is largely reversible and is influenced by the natural substrates and inhibitors of the enzyme. Mg(2+) serves as cofactor.

The protein resides in the cytoplasm. The enzyme catalyses 1-(5-phospho-beta-D-ribosyl)-ATP + diphosphate = 5-phospho-alpha-D-ribose 1-diphosphate + ATP. Its pathway is amino-acid biosynthesis; L-histidine biosynthesis; L-histidine from 5-phospho-alpha-D-ribose 1-diphosphate: step 1/9. With respect to regulation, feedback inhibited by histidine. Functionally, catalyzes the condensation of ATP and 5-phosphoribose 1-diphosphate to form N'-(5'-phosphoribosyl)-ATP (PR-ATP). Has a crucial role in the pathway because the rate of histidine biosynthesis seems to be controlled primarily by regulation of HisG enzymatic activity. The polypeptide is ATP phosphoribosyltransferase (hisG) (Mycobacterium leprae (strain TN)).